Here is a 24-residue protein sequence, read N- to C-terminus: Coenzyme PQQ synthesis protein A (24 aa).

Positions 16–20 (EITMY) form a cross-link, pyrroloquinoline quinone (Glu-Tyr).

It belongs to the PqqA family.

The protein operates within cofactor biosynthesis; pyrroloquinoline quinone biosynthesis. Its function is as follows. Required for coenzyme pyrroloquinoline quinone (PQQ) biosynthesis. PQQ is probably formed by cross-linking a specific glutamate to a specific tyrosine residue and excising these residues from the peptide. In Variovorax paradoxus (strain S110), this protein is Coenzyme PQQ synthesis protein A.